We begin with the raw amino-acid sequence, 259 residues long: Cytosolic Fe-S cluster assembly factor Nubp2 homolog (259 aa).

Residue 14 to 21 participates in ATP binding; sequence GKGGVGKS. [4Fe-4S] cluster contacts are provided by cysteine 188 and cysteine 191.

The protein belongs to the Mrp/NBP35 ATP-binding proteins family. NUBP2/CFD1 subfamily. As to quaternary structure, heterotetramer of 2 Nubp1 and 2 Nubp2 chains. Requires [4Fe-4S] cluster as cofactor.

It is found in the cytoplasm. Functionally, component of the cytosolic iron-sulfur (Fe/S) protein assembly (CIA) machinery. Required for maturation of extramitochondrial Fe-S proteins. The Nubp1-Nubp2 heterotetramer forms a Fe-S scaffold complex, mediating the de novo assembly of an Fe-S cluster and its transfer to target apoproteins. In Anopheles gambiae (African malaria mosquito), this protein is Cytosolic Fe-S cluster assembly factor Nubp2 homolog.